Consider the following 602-residue polypeptide: MEVFTFEKSYLERLKEAEAVLSWEGAVMPASQVRSEWKSYVELKIEPAGWQAIWKIPRVICEDLKLRYPTIVYGYVEQVIFDELKAVFVVTAVQDSDVHLPESNEVSLVELWPTVQQENAALNVDTTAECIDRLRFFYTHVWMPWDKDYDDDRDWVQQHLQARIQLVCDLSKNRLPRPLALHMRTLLAEAKYIQQRLDYLELDLSDAESDDEAVELNDSVAEPARKQSKAGSANGCLNVSSLPVTDLMCLHLRMAIIRSEFEILENPEMRRAYSELQSNSLKRLRCSSGRTRQSEDLLVERNSISHVVTLPGKLQQQLELLKLAQTLVKPESKVQLSNTLQDVLSICQSNDDILLSPGEHTIKFLEHLNDNGSLRGLTQPEAILSPAADLSLLPVVCSSDEDSTLLVIDGDYTLSELVLDCRHVRRGILLRNGTLTMRGCRLLGDGSSSTQEGIVCMPGASVELKSCLIENFAVGVSMRPKSSAELGSVQFKTCKTGLELLEKSASVNLQGSKCSFENCALGILADGFVLGEQRTEKVLVLNKFSELQRYNEDNLLGNCSFYNCKKNVRVFNESGQLLAQRSHQQLLEDELGGENKENIQLV.

The stretch at 188 to 208 forms a coiled coil; sequence AEAKYIQQRLDYLELDLSDAE.

In terms of assembly, interacts (via N-terminus) with both members of the centralspindlin complex, Pav and Tum. Detected in testis (at protein level). Also expressed in ovary.

The protein resides in the midbody. In terms of biological role, required during male meiosis for completion of spermatocyte cytokinesis and possibly also required in female germline cells. Also involved in ring canal formation in male and female germline cells. Not essential for cleavage furrow ingression but is required for contractile ring stability and the attachment of the furrowing membrane to the actomyosin ring in late telophase. Displays high binding affinity for beta-galactosides. In Drosophila melanogaster (Fruit fly), this protein is Protein nessun dorma.